A 180-amino-acid polypeptide reads, in one-letter code: Tubulin polymerization-promoting protein homolog (180 aa).

Composition is skewed to basic and acidic residues over residues Thr-136 to Thr-158 and Lys-169 to Lys-180. The segment at Thr-136–Lys-180 is disordered.

This sequence belongs to the TPPP family.

Functionally, regulator of microtubule dynamics. The chain is Tubulin polymerization-promoting protein homolog from Caenorhabditis elegans.